A 452-amino-acid polypeptide reads, in one-letter code: Maltoporin (452 aa).

The signal sequence occupies residues 1–25; sequence MMITLRKLPLAVAVAAGVMSAQAMA.

The protein belongs to the porin LamB (TC 1.B.3) family. As to quaternary structure, homotrimer formed of three 18-stranded antiparallel beta-barrels, containing three independent channels.

It localises to the cell outer membrane. It catalyses the reaction beta-maltose(in) = beta-maltose(out). Involved in the transport of maltose and maltodextrins. This is Maltoporin from Salmonella paratyphi A (strain ATCC 9150 / SARB42).